Reading from the N-terminus, the 181-residue chain is SRP-independent targeting protein 2 (181 aa).

Residues 1 to 15 are Cytoplasmic-facing; the sequence is MAGKAGRKQASSNAK. A helical membrane pass occupies residues 16 to 36; that stretch reads IIQGLYKQVSLFLGMAIVRLF. Residues 37–45 are Lumenal-facing; it reads ISRKVTIGQ. The helical transmembrane segment at 46–66 threads the bilayer; it reads WIKLVALNVPMFVALYIIVLS. Residues 67 to 89 lie on the Cytoplasmic side of the membrane; sequence GKPKYDGNRVVKQGIDLNDNTNL. A helical transmembrane segment spans residues 90–110; that stretch reads ISYFFDLIYLSLFGNIGIIAF. The Lumenal segment spans residues 111-112; sequence RT. Residues 113-133 form a helical membrane-spanning segment; the sequence is FKFWWCLLLCPIYAGYKLYGL. Residues 134 to 181 lie on the Cytoplasmic side of the membrane; the sequence is KNMFMPGAQQTQADNRSKNANEGQSKSKRQMKRERRGETDSKIKYKYR. The span at 144–157 shows a compositional bias: polar residues; the sequence is TQADNRSKNANEGQ. The disordered stretch occupies residues 144–181; it reads TQADNRSKNANEGQSKSKRQMKRERRGETDSKIKYKYR. A compositionally biased stretch (basic and acidic residues) spans 168-181; it reads RRGETDSKIKYKYR.

It belongs to the TMEM208 family. As to quaternary structure, interacts with SND1, PHO88/SND3 and the translocon complex subunit SEC61. ENV10/SND2 and PHO88/SND3 form a complex with the translocon in the endoplasmic reticulum membrane.

It localises to the endoplasmic reticulum membrane. Functionally, functions in the SND pathway, a SRP (signal recognition particle) and GET (guided entry of tail-anchored proteins) independent pathway for targeting a broad range of substrate proteins to the endoplasmic reticulum. SND functions in parallel to GET in targeting proteins with downstream hydrophobic motifs. Involved in vacuolar processing and morphology. This Saccharomyces cerevisiae (strain ATCC 204508 / S288c) (Baker's yeast) protein is SRP-independent targeting protein 2.